Consider the following 481-residue polypeptide: Glutamate--tRNA ligase (481 aa).

Residues 9 to 19 carry the 'HIGH' region motif; it reads PSPTGNLHIGT. The 'KMSKS' region signature appears at 249-253; it reads KLSKR. Lysine 252 provides a ligand contact to ATP.

Belongs to the class-I aminoacyl-tRNA synthetase family. Glutamate--tRNA ligase type 1 subfamily. As to quaternary structure, monomer.

Its subcellular location is the cytoplasm. The enzyme catalyses tRNA(Glu) + L-glutamate + ATP = L-glutamyl-tRNA(Glu) + AMP + diphosphate. Functionally, catalyzes the attachment of glutamate to tRNA(Glu) in a two-step reaction: glutamate is first activated by ATP to form Glu-AMP and then transferred to the acceptor end of tRNA(Glu). The chain is Glutamate--tRNA ligase from Picosynechococcus sp. (strain ATCC 27264 / PCC 7002 / PR-6) (Agmenellum quadruplicatum).